Consider the following 500-residue polypeptide: L-arabinose isomerase (500 aa).

The Mn(2+) site is built by Glu-306, Glu-333, His-350, and His-450.

This sequence belongs to the arabinose isomerase family. In terms of assembly, homohexamer. Mn(2+) is required as a cofactor.

The enzyme catalyses beta-L-arabinopyranose = L-ribulose. It functions in the pathway carbohydrate degradation; L-arabinose degradation via L-ribulose; D-xylulose 5-phosphate from L-arabinose (bacterial route): step 1/3. Catalyzes the conversion of L-arabinose to L-ribulose. This is L-arabinose isomerase from Shigella boydii serotype 18 (strain CDC 3083-94 / BS512).